The following is a 275-amino-acid chain: NH(3)-dependent NAD(+) synthetase (275 aa).

Residue 50–57 (GISGGVDS) coordinates ATP. Asp-56 contributes to the Mg(2+) binding site. Arg-147 is a binding site for deamido-NAD(+). ATP is bound at residue Thr-167. Position 172 (Glu-172) interacts with Mg(2+). Deamido-NAD(+)-binding residues include Lys-180 and Asp-187. ATP contacts are provided by Lys-196 and Thr-218. 267–268 (HK) contributes to the deamido-NAD(+) binding site.

The protein belongs to the NAD synthetase family. As to quaternary structure, homodimer.

It catalyses the reaction deamido-NAD(+) + NH4(+) + ATP = AMP + diphosphate + NAD(+) + H(+). Its pathway is cofactor biosynthesis; NAD(+) biosynthesis; NAD(+) from deamido-NAD(+) (ammonia route): step 1/1. In terms of biological role, catalyzes the ATP-dependent amidation of deamido-NAD to form NAD. Uses ammonia as a nitrogen source. The chain is NH(3)-dependent NAD(+) synthetase from Pseudomonas fluorescens (strain Pf0-1).